The sequence spans 176 residues: Ribosome maturation factor RimM (176 aa).

The PRC barrel domain maps to 100-173 (KDEYHYHDLI…WLLINPPPGL (74 aa)).

Belongs to the RimM family. As to quaternary structure, binds ribosomal protein uS19.

The protein resides in the cytoplasm. Its function is as follows. An accessory protein needed during the final step in the assembly of 30S ribosomal subunit, possibly for assembly of the head region. Essential for efficient processing of 16S rRNA. May be needed both before and after RbfA during the maturation of 16S rRNA. It has affinity for free ribosomal 30S subunits but not for 70S ribosomes. This is Ribosome maturation factor RimM from Prochlorococcus marinus (strain NATL1A).